The chain runs to 226 residues: Phosphoribosylformylglycinamidine synthase subunit PurQ (226 aa).

The Glutamine amidotransferase type-1 domain occupies 2–226; the sequence is KIAVVVFPGS…LENGRIKVEA (225 aa). The active-site Nucleophile is the Cys-86. Residues His-195 and Glu-197 contribute to the active site.

Part of the FGAM synthase complex composed of 1 PurL, 1 PurQ and 2 PurS subunits.

Its subcellular location is the cytoplasm. It catalyses the reaction N(2)-formyl-N(1)-(5-phospho-beta-D-ribosyl)glycinamide + L-glutamine + ATP + H2O = 2-formamido-N(1)-(5-O-phospho-beta-D-ribosyl)acetamidine + L-glutamate + ADP + phosphate + H(+). The catalysed reaction is L-glutamine + H2O = L-glutamate + NH4(+). It functions in the pathway purine metabolism; IMP biosynthesis via de novo pathway; 5-amino-1-(5-phospho-D-ribosyl)imidazole from N(2)-formyl-N(1)-(5-phospho-D-ribosyl)glycinamide: step 1/2. Part of the phosphoribosylformylglycinamidine synthase complex involved in the purines biosynthetic pathway. Catalyzes the ATP-dependent conversion of formylglycinamide ribonucleotide (FGAR) and glutamine to yield formylglycinamidine ribonucleotide (FGAM) and glutamate. The FGAM synthase complex is composed of three subunits. PurQ produces an ammonia molecule by converting glutamine to glutamate. PurL transfers the ammonia molecule to FGAR to form FGAM in an ATP-dependent manner. PurS interacts with PurQ and PurL and is thought to assist in the transfer of the ammonia molecule from PurQ to PurL. The polypeptide is Phosphoribosylformylglycinamidine synthase subunit PurQ (Limosilactobacillus reuteri (strain DSM 20016) (Lactobacillus reuteri)).